We begin with the raw amino-acid sequence, 136 residues long: Transmembrane protein 203 (136 aa).

The interaction with STING1 stretch occupies residues 1-51; the sequence is MLFSLRELVQWLGFATFEIFVHLLALLVFSVLLALRVDGLVPGLSWWNVFV. 4 consecutive transmembrane segments (helical) span residues 14-34, 50-72, 81-101, and 112-132; these read FATF…VLLA, FVPF…VRLF, VLRL…EMLL, and LWFG…MIRA. The segment at 52–136 is required for the lysosomal localization of the STING-TMEM203 complex; sequence PFFAADGLST…LLMIRACRVN (85 aa).

As to quaternary structure, homodimer. Interacts with ATP2A2, ITPR3 and STIM1. Interacts with STING1 (via transmembrane domain). In terms of tissue distribution, increased expression seen in T-lymphocytes from patients with systemic lupus erythematosus (SLE).

Its subcellular location is the endoplasmic reticulum membrane. It localises to the endoplasmic reticulum-Golgi intermediate compartment. The protein resides in the lysosome membrane. Its function is as follows. Involved in the regulation of cellular calcium homeotasis. Required for spermatogenesis. Acts as a regulator of STING-mediated inflammatory signaling in macrophages. Forms a complex with STING, promoting the activity of TBK1 kinase and the transcription factor IRF3, leading to activation of type I interferon expression. In Homo sapiens (Human), this protein is Transmembrane protein 203 (TMEM203).